A 652-amino-acid chain; its full sequence is DNA polymerase epsilon subunit B (652 aa).

This sequence belongs to the DNA polymerase epsilon subunit B family. As to quaternary structure, heterotetramer. Consists of four subunits: POL2, DPB2, DPB3 and DPB4.

It localises to the nucleus. Its function is as follows. As accessory component of the DNA polymerase epsilon (DNA polymerase II) participates in chromosomal DNA replication. This chain is DNA polymerase epsilon subunit B (DPB2), found in Yarrowia lipolytica (strain CLIB 122 / E 150) (Yeast).